A 94-amino-acid chain; its full sequence is DNA-binding protein HU (94 aa).

The interval arginine 55–glycine 94 is disordered. A compositionally biased stretch (basic and acidic residues) spans alanine 84–glycine 94.

This sequence belongs to the bacterial histone-like protein family.

Its function is as follows. Histone-like DNA-binding protein which is capable of wrapping DNA to stabilize it, and thus to prevent its denaturation under extreme environmental conditions. The sequence is that of DNA-binding protein HU (hup) from Xylella fastidiosa (strain Temecula1 / ATCC 700964).